Reading from the N-terminus, the 93-residue chain is Small ribosomal subunit protein uS19 (93 aa).

This sequence belongs to the universal ribosomal protein uS19 family.

In terms of biological role, protein S19 forms a complex with S13 that binds strongly to the 16S ribosomal RNA. The polypeptide is Small ribosomal subunit protein uS19 (Latilactobacillus sakei subsp. sakei (strain 23K) (Lactobacillus sakei subsp. sakei)).